We begin with the raw amino-acid sequence, 453 residues long: Tubulin alpha-13 chain (453 aa).

Glutamine 11 contributes to the GTP binding site. Lysine 40 is modified (N6-acetyllysine). Residues glutamate 71, serine 140, glycine 144, threonine 145, threonine 179, asparagine 206, and asparagine 228 each contribute to the GTP site. Glutamate 71 lines the Mg(2+) pocket. Glutamate 254 is an active-site residue. Residues glutamate 429–glutamine 453 are disordered. Residues aspartate 431–glutamine 453 are compositionally biased toward acidic residues.

It belongs to the tubulin family. In terms of assembly, dimer of alpha and beta chains. A typical microtubule is a hollow water-filled tube with an outer diameter of 25 nm and an inner diameter of 15 nM. Alpha-beta heterodimers associate head-to-tail to form protofilaments running lengthwise along the microtubule wall with the beta-tubulin subunit facing the microtubule plus end conferring a structural polarity. Microtubules usually have 13 protofilaments but different protofilament numbers can be found in some organisms and specialized cells. Mg(2+) serves as cofactor. In terms of processing, acetylation of alpha chains at Lys-40 stabilizes microtubules and affects affinity and processivity of microtubule motors. This modification has a role in multiple cellular functions, ranging from cell motility, cell cycle progression or cell differentiation to intracellular trafficking and signaling.

The protein resides in the cytoplasm. Its subcellular location is the cytoskeleton. The catalysed reaction is GTP + H2O = GDP + phosphate + H(+). In terms of biological role, tubulin is the major constituent of microtubules, a cylinder consisting of laterally associated linear protofilaments composed of alpha- and beta-tubulin heterodimers. Microtubules grow by the addition of GTP-tubulin dimers to the microtubule end, where a stabilizing cap forms. Below the cap, tubulin dimers are in GDP-bound state, owing to GTPase activity of alpha-tubulin. The sequence is that of Tubulin alpha-13 chain (TUBA13) from Naegleria pringsheimi (Amoeba).